A 266-amino-acid chain; its full sequence is Putative carbamate hydrolase RutD (266 aa).

Residues 14–115 (PVVVLISGLG…TMLVSVNGWL (102 aa)) form the AB hydrolase-1 domain.

Belongs to the AB hydrolase superfamily. Hydrolase RutD family.

The catalysed reaction is carbamate + 2 H(+) = NH4(+) + CO2. In terms of biological role, involved in pyrimidine catabolism. May facilitate the hydrolysis of carbamate, a reaction that can also occur spontaneously. The chain is Putative carbamate hydrolase RutD from Shigella flexneri serotype X (strain 2002017).